We begin with the raw amino-acid sequence, 471 residues long: Ribulose bisphosphate carboxylase large chain (471 aa).

Residues Asn-115 and Thr-165 each coordinate substrate. The active-site Proton acceptor is the Lys-167. Lys-169 lines the substrate pocket. 3 residues coordinate Mg(2+): Lys-193, Asp-195, and Glu-196. The residue at position 193 (Lys-193) is an N6-carboxylysine. The active-site Proton acceptor is the His-286. Residues Arg-287, His-319, and Ser-371 each contribute to the substrate site.

The protein belongs to the RuBisCO large chain family. Type I subfamily. As to quaternary structure, heterohexadecamer of 8 large chains and 8 small chains. Forms a CsoS2-CsoS1-RuBisCO complex. Requires Mg(2+) as cofactor.

It localises to the carboxysome. It catalyses the reaction 2 (2R)-3-phosphoglycerate + 2 H(+) = D-ribulose 1,5-bisphosphate + CO2 + H2O. The catalysed reaction is D-ribulose 1,5-bisphosphate + O2 = 2-phosphoglycolate + (2R)-3-phosphoglycerate + 2 H(+). Its function is as follows. RuBisCO catalyzes two reactions: the carboxylation of D-ribulose 1,5-bisphosphate, the primary event in carbon dioxide fixation, as well as the oxidative fragmentation of the pentose substrate in the photorespiration process. Both reactions occur simultaneously and in competition at the same active site. This chain is Ribulose bisphosphate carboxylase large chain, found in Parasynechococcus marenigrum (strain WH8102).